A 142-amino-acid polypeptide reads, in one-letter code: 5-hydroxymethyl-dUMP N-hydrolase (142 aa).

5-hydroxymethyl-dUMP contacts are provided by Gly7, Ile9, Arg10, Gly11, Ser78, Gly80, Glu84, and Ser108.

This sequence belongs to the 2'-deoxynucleoside 5'-phosphate N-hydrolase 1 family. In terms of assembly, monomer and homodimer.

It localises to the cytoplasm. The protein localises to the nucleus. It carries out the reaction 5-hydroxymethyl-dUMP + H2O = 5-hydroxymethyluracil + 2-deoxy-D-ribose 5-phosphate. Its function is as follows. Part of a nucleotide salvage pathway that eliminates epigenetically modified 5-hydroxymethyl-dCMP (hmdCMP) in a two-step process entailing deamination to cytotoxic 5-hydroxymethyl-dUMP (hmdUMP), followed by its hydrolysis into 5-hydroxymethyluracil (hmU) and 2-deoxy-D-ribose 5-phosphate (deoxyribosephosphate). Catalyzes the second step in that pathway, the hydrolysis of the N-glycosidic bond in hmdUMP, degrading this cytotoxic nucleotide to avoid its genomic integration. This Tetraodon nigroviridis (Spotted green pufferfish) protein is 5-hydroxymethyl-dUMP N-hydrolase (dnph1).